The following is a 642-amino-acid chain: Serine/threonine-protein kinase pakA (642 aa).

Polar residues-rich tracts occupy residues 1–12 (MSLKKQQQQSDF) and 38–48 (LRQSASFTALN). The tract at residues 1 to 82 (MSLKKQQQQS…GFGTKPRRKN (82 aa)) is disordered. The region spanning 100-113 (ISAPENPVHVTHVG) is the CRIB domain. Disordered stretches follow at residues 180–276 (GEYP…PIPE) and 317–338 (QLDR…RTRQ). Composition is skewed to low complexity over residues 217-227 (SQSSPVPVLSS) and 254-266 (VVSN…RPAN). The Protein kinase domain occupies 361-612 (YYNLNKIGQG…AHDLLKHPFM (252 aa)). ATP contacts are provided by residues 367–375 (IGQGASGGV) and K390. Residue D480 is the Proton acceptor of the active site.

The protein belongs to the protein kinase superfamily. STE Ser/Thr protein kinase family. STE20 subfamily.

It localises to the cytoplasm. The protein localises to the nucleus. The enzyme catalyses L-seryl-[protein] + ATP = O-phospho-L-seryl-[protein] + ADP + H(+). The catalysed reaction is L-threonyl-[protein] + ATP = O-phospho-L-threonyl-[protein] + ADP + H(+). In terms of biological role, MAP4K component of the MAPK pathway required for the mating pheromone response and the regulation of cell polarity and cell cycle. The polypeptide is Serine/threonine-protein kinase pakA (pakA) (Talaromyces marneffei (Penicillium marneffei)).